The chain runs to 151 residues: Methylglyoxal synthase (151 aa).

Residues 6 to 151 (RVMPAHKHIA…DYDAYLAERV (146 aa)) form the MGS-like domain. Substrate-binding positions include histidine 19, lysine 23, 45–48 (TGTT), and 65–66 (SG). The active-site Proton donor/acceptor is aspartate 71. Histidine 98 is a binding site for substrate.

This sequence belongs to the methylglyoxal synthase family.

The enzyme catalyses dihydroxyacetone phosphate = methylglyoxal + phosphate. In terms of biological role, catalyzes the formation of methylglyoxal from dihydroxyacetone phosphate. This is Methylglyoxal synthase from Aliivibrio fischeri (strain ATCC 700601 / ES114) (Vibrio fischeri).